We begin with the raw amino-acid sequence, 175 residues long: B9 domain-containing protein 2 (175 aa).

Positions 2 to 118 constitute a C2 B9-type domain; it reads AELHIIGQII…QCVTWRPLGS (117 aa).

It belongs to the B9D family. As to quaternary structure, part of the tectonic-like complex (also named B9 complex).

Its subcellular location is the cytoplasm. It is found in the cytoskeleton. The protein localises to the cilium basal body. The protein resides in the cilium axoneme. In terms of biological role, component of the tectonic-like complex, a complex localized at the transition zone of primary cilia and acting as a barrier that prevents diffusion of transmembrane proteins between the cilia and plasma membranes. In Danio rerio (Zebrafish), this protein is B9 domain-containing protein 2 (b9d2).